A 619-amino-acid chain; its full sequence is Pescadillo homolog (619 aa).

The tract at residues 303–324 (ADKDQKDQDTIEDAEEVTEPTV) is disordered. The span at 312 to 324 (TIEDAEEVTEPTV) shows a compositional bias: acidic residues. The 100-residue stretch at 353-452 (PTSQLFSKFI…ELVSVGDYAP (100 aa)) folds into the BRCT domain. The segment at 456-567 (LPPHLSPWGD…STKAALTPEE (112 aa)) is disordered. 2 coiled-coil regions span residues 472–560 (NAKA…ASTK) and 588–619 (MQYG…LKDV). Positions 480-522 (EAEEEEEEEEEDEEEEEEEEEIEVADGDEDQDDEEEEEIEDED) are enriched in acidic residues. The segment covering 523 to 539 (LKAQKELEMEVAGKKFS) has biased composition (basic and acidic residues).

This sequence belongs to the pescadillo family. As to quaternary structure, component of the NOP7 complex, composed of ERB1, NOP7 and YTM1. The complex is held together by ERB1, which interacts with NOP7 via its N-terminal domain and with YTM1 via a high-affinity interaction between the seven-bladed beta-propeller domains of the 2 proteins. The NOP7 complex associates with the 66S pre-ribosome.

The protein resides in the nucleus. It localises to the nucleolus. It is found in the nucleoplasm. In terms of biological role, component of the NOP7 complex, which is required for maturation of the 25S and 5.8S ribosomal RNAs and formation of the 60S ribosome. This is Pescadillo homolog from Lodderomyces elongisporus (strain ATCC 11503 / CBS 2605 / JCM 1781 / NBRC 1676 / NRRL YB-4239) (Yeast).